The following is a 1018-amino-acid chain: Cytadherence high molecular weight protein 1 (1018 aa).

Coiled coils occupy residues 782 to 815 (NRFL…AKDL) and 849 to 880 (ELVR…AVYK).

In terms of processing, phosphorylated mainly on serine residues.

It is found in the cell projection. Its subcellular location is the attachment organelle membrane. Functionally, component of the cytoskeleton-like structure which stabilizes the shape of the wall-less Mycoplasma. This cytoskeleton-like network of accessory proteins containing HMW proteins 1 to 5 allows the proper anchoring of cytadhesin proteins in the mycoplasmal membrane at the attachment organelle. This is Cytadherence high molecular weight protein 1 (hmw1) from Mycoplasma pneumoniae (strain ATCC 29342 / M129 / Subtype 1) (Mycoplasmoides pneumoniae).